A 121-amino-acid polypeptide reads, in one-letter code: MTIEQILEAIENMKVLELNELVKAAEEKFGVSASAPVMVAGAAAGGPAAEEKTEFDVVLTDVGSSKVGVIKAVREITGLGLKEAKEVVDNAPKTVKEGASKEEADQIKEKLEAAGAKVEVK.

The protein belongs to the bacterial ribosomal protein bL12 family. In terms of assembly, homodimer. Part of the ribosomal stalk of the 50S ribosomal subunit. Forms a multimeric L10(L12)X complex, where L10 forms an elongated spine to which 2 to 4 L12 dimers bind in a sequential fashion. Binds GTP-bound translation factors.

Its function is as follows. Forms part of the ribosomal stalk which helps the ribosome interact with GTP-bound translation factors. Is thus essential for accurate translation. The protein is Large ribosomal subunit protein bL12 of Clostridioides difficile (strain 630) (Peptoclostridium difficile).